The following is a 544-amino-acid chain: CTP synthase (544 aa).

An amidoligase domain region spans residues 1 to 267 (MSKFVFVTGG…GDLLVSRLHL (267 aa)). A CTP-binding site is contributed by Ser13. Residue Ser13 participates in UTP binding. ATP is bound at residue 14 to 19 (SVGKGI). Tyr54 is an L-glutamine binding site. ATP is bound at residue Asp71. Mg(2+) contacts are provided by Asp71 and Glu141. Residues 148-150 (DIE), 188-193 (KTKPTQ), and Lys224 each bind CTP. Residues 188-193 (KTKPTQ) and Lys224 each bind UTP. Positions 299–534 (YVELKDAYYS…INAAKKVIRD (236 aa)) constitute a Glutamine amidotransferase type-1 domain. Gly354 is a binding site for L-glutamine. Residue Cys381 is the Nucleophile; for glutamine hydrolysis of the active site. L-glutamine-binding positions include 382-385 (LGMQ), Glu405, and Arg462. Active-site residues include His507 and Glu509.

Belongs to the CTP synthase family. In terms of assembly, homotetramer.

The enzyme catalyses UTP + L-glutamine + ATP + H2O = CTP + L-glutamate + ADP + phosphate + 2 H(+). It catalyses the reaction L-glutamine + H2O = L-glutamate + NH4(+). The catalysed reaction is UTP + NH4(+) + ATP = CTP + ADP + phosphate + 2 H(+). It functions in the pathway pyrimidine metabolism; CTP biosynthesis via de novo pathway; CTP from UDP: step 2/2. Allosterically activated by GTP, when glutamine is the substrate; GTP has no effect on the reaction when ammonia is the substrate. The allosteric effector GTP functions by stabilizing the protein conformation that binds the tetrahedral intermediate(s) formed during glutamine hydrolysis. Inhibited by the product CTP, via allosteric rather than competitive inhibition. Catalyzes the ATP-dependent amination of UTP to CTP with either L-glutamine or ammonia as the source of nitrogen. Regulates intracellular CTP levels through interactions with the four ribonucleotide triphosphates. In Dehalococcoides mccartyi (strain ATCC BAA-2266 / KCTC 15142 / 195) (Dehalococcoides ethenogenes (strain 195)), this protein is CTP synthase.